The sequence spans 191 residues: Neuronal calcium sensor 1 (191 aa).

A lipid anchor (N-myristoyl glycine) is attached at glycine 2. EF-hand domains are found at residues 24 to 59 (ESEI…FPFG), 60 to 95 (DPSK…TSRG), 96 to 131 (TVEE…IYRM), and 144 to 179 (TPEK…DPTI). 14 residues coordinate Ca(2+): aspartate 73, asparagine 75, aspartate 77, glutamate 84, aspartate 109, aspartate 111, aspartate 113, tyrosine 115, glutamate 120, aspartate 157, asparagine 159, aspartate 161, glutamine 163, and glutamate 168.

It belongs to the recoverin family.

The protein localises to the perikaryon. It is found in the cell projection. It localises to the growth cone. Neuronal calcium sensor, regulator of G protein-coupled receptor phosphorylation in a calcium dependent manner. Regulates neurite extension and branching by activity-dependent Ca(2+) influx in growth cones. This is Neuronal calcium sensor 1 from Lymnaea stagnalis (Great pond snail).